Consider the following 231-residue polypeptide: Succinate dehydrogenase subunit 5, mitochondrial (231 aa).

Residues 1 to 63 (MAAALRSSCA…AFSWNLRRLF (63 aa)) constitute a mitochondrion transit peptide.

Component of complex II composed of eight subunits in plants: four classical SDH subunits SDH1, SDH2, SDH3 and SDH4 (a flavoprotein (FP), an iron-sulfur protein (IP), and a cytochrome b composed of a large and a small subunit.), as well as four subunits unknown in mitochondria from bacteria and heterotrophic eukaryotes.

It is found in the mitochondrion inner membrane. It functions in the pathway carbohydrate metabolism; tricarboxylic acid cycle. The polypeptide is Succinate dehydrogenase subunit 5, mitochondrial (Oryza sativa subsp. japonica (Rice)).